The following is a 548-amino-acid chain: Luciferin 4-monooxygenase (548 aa).

The Microbody targeting signal motif lies at 546 to 548 (AKM).

It belongs to the ATP-dependent AMP-binding enzyme family. Requires Mg(2+) as cofactor.

It localises to the peroxisome. It carries out the reaction firefly D-luciferin + ATP + O2 = firefly oxyluciferin + hnu + AMP + CO2 + diphosphate. In terms of biological role, produces green light with a wavelength of 544 nm. This Nipponoluciola cruciata (Genji firefly) protein is Luciferin 4-monooxygenase.